A 251-amino-acid polypeptide reads, in one-letter code: Tachykinins (251 aa).

The first 21 residues, 1–21, serve as a signal peptide directing secretion; the sequence is MGAPRTCLIFITIQLVSLAYA. The propeptide occupies 22–25; that stretch reads QEVS. Position 36 is an arginine amide (arginine 36). The propeptide occupies 39-50; the sequence is KYFDEEGIEQFY. A Lysine amide modification is found at lysine 61. A propeptide spanning residues 65 to 163 is cleaved from the precursor; that stretch reads SLQDILEAPE…MEPEQSNDLD (99 aa). Arginine amide is present on arginine 176. A propeptide spanning residues 180-183 is cleaved from the precursor; sequence SINN. Position 199 is an arginine amide (arginine 199). Residues 203–223 constitute a propeptide that is removed on maturation; the sequence is DLKNSNAHEIKFLVDQNGPLP. The residue at position 235 (arginine 235) is an Arginine amide. Residues 239-251 constitute a propeptide that is removed on maturation; the sequence is WTDEPSLEMDMPN.

Belongs to the tachykinin family. As to expression, tachykinin-related peptide 1: Expressed in antennal lobe (AL) and gnathal ganglion (GNG) (at protein level). Expression in AL detected in all animals, in GNG in most animals (at protein level). Not expressed in corpora cardiaca (CC) and corpora allata (CA) (at protein level). Tachykinin-related peptide 2: Expressed in antennal lobe (AL) corpora cardiaca (CC) and corpora allata (CA) with expression detected in few animals (at protein level). Not expressed in gnathal ganglion (GNG) (at protein level). Tachykinin-related peptide 4: Expressed in corpora cardiaca (CC), corpora allata (CA), antennal lobe (AL) and gnathal ganglion (GNG) (at protein level). Expression in AL and GNG detected in most animals, in CC and CA detected in few animals (at protein level). Tachykinin-related peptide 5: Expressed in corpora cardiaca (CC), corpora allata (CA), antennal lobe (AL) and gnathal ganglion (GNG) (at protein level). Expression in CC and CA detected in some animals, in AL and GNG in few animals (at protein level). Tachykinin-related peptide 6: Expressed in antennal lobe (AL) and gnathal ganglion (GNG) (at protein level). Expression in AL detected in all animals, in GNG in some animals (at protein level). Not expressed in corpora cardiaca (CC) and corpora allata (CA) (at protein level).

The protein resides in the secreted. Functionally, tachykinins are active peptides which excite neurons, evoke behavioral responses, are potent vasodilators and secretagogues, and contract (directly or indirectly) many smooth muscles. The polypeptide is Tachykinins (Agrotis ipsilon (Black cutworm moth)).